The primary structure comprises 215 residues: Pyrrolidone-carboxylate peptidase (215 aa).

Residues Glu78, Cys141, and His165 contribute to the active site.

Belongs to the peptidase C15 family. In terms of assembly, homotetramer.

The protein resides in the cytoplasm. The catalysed reaction is Release of an N-terminal pyroglutamyl group from a polypeptide, the second amino acid generally not being Pro.. Functionally, removes 5-oxoproline from various penultimate amino acid residues except L-proline. This chain is Pyrrolidone-carboxylate peptidase, found in Streptococcus suis (strain 98HAH33).